A 448-amino-acid polypeptide reads, in one-letter code: Probable glycine dehydrogenase (decarboxylating) subunit 1 (448 aa).

Belongs to the GcvP family. N-terminal subunit subfamily. In terms of assembly, the glycine cleavage system is composed of four proteins: P, T, L and H. In this organism, the P 'protein' is a heterodimer of two subunits.

The catalysed reaction is N(6)-[(R)-lipoyl]-L-lysyl-[glycine-cleavage complex H protein] + glycine + H(+) = N(6)-[(R)-S(8)-aminomethyldihydrolipoyl]-L-lysyl-[glycine-cleavage complex H protein] + CO2. Functionally, the glycine cleavage system catalyzes the degradation of glycine. The P protein binds the alpha-amino group of glycine through its pyridoxal phosphate cofactor; CO(2) is released and the remaining methylamine moiety is then transferred to the lipoamide cofactor of the H protein. The chain is Probable glycine dehydrogenase (decarboxylating) subunit 1 from Rhodospirillum rubrum (strain ATCC 11170 / ATH 1.1.1 / DSM 467 / LMG 4362 / NCIMB 8255 / S1).